The sequence spans 203 residues: ATP-dependent Clp protease proteolytic subunit (203 aa).

Ser-103 functions as the Nucleophile in the catalytic mechanism. His-128 is an active-site residue.

The protein belongs to the peptidase S14 family. As to quaternary structure, fourteen ClpP subunits assemble into 2 heptameric rings which stack back to back to give a disk-like structure with a central cavity, resembling the structure of eukaryotic proteasomes.

It is found in the cytoplasm. It catalyses the reaction Hydrolysis of proteins to small peptides in the presence of ATP and magnesium. alpha-casein is the usual test substrate. In the absence of ATP, only oligopeptides shorter than five residues are hydrolyzed (such as succinyl-Leu-Tyr-|-NHMec, and Leu-Tyr-Leu-|-Tyr-Trp, in which cleavage of the -Tyr-|-Leu- and -Tyr-|-Trp bonds also occurs).. In terms of biological role, cleaves peptides in various proteins in a process that requires ATP hydrolysis. Has a chymotrypsin-like activity. Plays a major role in the degradation of misfolded proteins. This is ATP-dependent Clp protease proteolytic subunit from Nitrosococcus oceani (strain ATCC 19707 / BCRC 17464 / JCM 30415 / NCIMB 11848 / C-107).